Here is a 67-residue protein sequence, read N- to C-terminus: Large ribosomal subunit protein bL35 (67 aa).

The segment covering 1 to 16 (MPKMKTKSSAKKRFRV) has biased composition (basic residues). Residues 1 to 23 (MPKMKTKSSAKKRFRVRPGGTVK) form a disordered region.

This sequence belongs to the bacterial ribosomal protein bL35 family.

The chain is Large ribosomal subunit protein bL35 from Variovorax paradoxus (strain S110).